We begin with the raw amino-acid sequence, 265 residues long: tRNA (guanine-N(7)-)-methyltransferase (265 aa).

S-adenosyl-L-methionine is bound by residues E96, E121, D148, and D170. D170 is a catalytic residue. Residues K174 and D206 each coordinate substrate.

Belongs to the class I-like SAM-binding methyltransferase superfamily. TrmB family.

The enzyme catalyses guanosine(46) in tRNA + S-adenosyl-L-methionine = N(7)-methylguanosine(46) in tRNA + S-adenosyl-L-homocysteine. It functions in the pathway tRNA modification; N(7)-methylguanine-tRNA biosynthesis. Catalyzes the formation of N(7)-methylguanine at position 46 (m7G46) in tRNA. The sequence is that of tRNA (guanine-N(7)-)-methyltransferase from Rhodopseudomonas palustris (strain ATCC BAA-98 / CGA009).